Reading from the N-terminus, the 495-residue chain is Glycerol kinase (495 aa).

Position 13 (Thr13) interacts with ADP. Positions 13, 14, and 15 each coordinate ATP. Thr13 contributes to the sn-glycerol 3-phosphate binding site. Arg17 is an ADP binding site. Arg83, Glu84, Tyr135, and Asp244 together coordinate sn-glycerol 3-phosphate. Arg83, Glu84, Tyr135, Asp244, and Gln245 together coordinate glycerol. ADP is bound by residues Thr266 and Gly309. ATP contacts are provided by Thr266, Gly309, Gln313, and Gly410. ADP is bound by residues Gly410 and Asn414.

It belongs to the FGGY kinase family.

It carries out the reaction glycerol + ATP = sn-glycerol 3-phosphate + ADP + H(+). It participates in polyol metabolism; glycerol degradation via glycerol kinase pathway; sn-glycerol 3-phosphate from glycerol: step 1/1. Its activity is regulated as follows. Inhibited by fructose 1,6-bisphosphate (FBP). Key enzyme in the regulation of glycerol uptake and metabolism. Catalyzes the phosphorylation of glycerol to yield sn-glycerol 3-phosphate. The sequence is that of Glycerol kinase from Shewanella woodyi (strain ATCC 51908 / MS32).